Reading from the N-terminus, the 430-residue chain is DD-carboxypeptidase/endopeptidase Mpg (430 aa).

The Zn(2+) site is built by H295, D299, and H375.

It belongs to the peptidase M23B family. Monomer. Zn(2+) serves as cofactor. Likely to be synthesized as a proenzyme. The cleavage of the N-terminal domain is probably required for the activation of the enzyme.

It is found in the cell outer membrane. Its function is as follows. Has both endopeptidase and DD-carboxypeptidase activities. Degrades cell wall peptidoglycan (PG) to allow consummate expression of pili. The sequence is that of DD-carboxypeptidase/endopeptidase Mpg from Neisseria meningitidis serogroup B (strain ATCC BAA-335 / MC58).